A 160-amino-acid chain; its full sequence is Nucleotide-binding protein VP1617 (160 aa).

Belongs to the YajQ family.

Functionally, nucleotide-binding protein. The sequence is that of Nucleotide-binding protein VP1617 from Vibrio parahaemolyticus serotype O3:K6 (strain RIMD 2210633).